Consider the following 186-residue polypeptide: ATP synthase subunit b (186 aa).

Residues 25–45 traverse the membrane as a helical segment; sequence IVWSVVCVAIIAVVFYKYVIP.

Belongs to the ATPase B chain family. As to quaternary structure, F-type ATPases have 2 components, F(1) - the catalytic core - and F(0) - the membrane proton channel. F(1) has five subunits: alpha(3), beta(3), gamma(1), delta(1), epsilon(1). F(0) has three main subunits: a(1), b(2) and c(10-14). The alpha and beta chains form an alternating ring which encloses part of the gamma chain. F(1) is attached to F(0) by a central stalk formed by the gamma and epsilon chains, while a peripheral stalk is formed by the delta and b chains.

Its subcellular location is the cell membrane. Functionally, f(1)F(0) ATP synthase produces ATP from ADP in the presence of a proton or sodium gradient. F-type ATPases consist of two structural domains, F(1) containing the extramembraneous catalytic core and F(0) containing the membrane proton channel, linked together by a central stalk and a peripheral stalk. During catalysis, ATP synthesis in the catalytic domain of F(1) is coupled via a rotary mechanism of the central stalk subunits to proton translocation. Component of the F(0) channel, it forms part of the peripheral stalk, linking F(1) to F(0). This Nocardia farcinica (strain IFM 10152) protein is ATP synthase subunit b.